Reading from the N-terminus, the 187-residue chain is uncharacterized protein (187 aa).

A helical membrane pass occupies residues 3 to 23; the sequence is AIIIFLILFIVGVLIGVGVYY.

Its subcellular location is the membrane. This is an uncharacterized protein from Methanocaldococcus jannaschii (strain ATCC 43067 / DSM 2661 / JAL-1 / JCM 10045 / NBRC 100440) (Methanococcus jannaschii).